The following is a 475-amino-acid chain: uncharacterized protein (475 aa).

To E.coli YihN.

This is an uncharacterized protein from Mycoplasma pneumoniae (strain ATCC 29342 / M129 / Subtype 1) (Mycoplasmoides pneumoniae).